The chain runs to 202 residues: Probable GTP-binding protein EngB (202 aa).

The 176-residue stretch at 22-197 folds into the EngB-type G domain; it reads VFPEYAFIGR…LDYIENISKE (176 aa). GTP is bound by residues 30–37, 57–61, 75–78, 142–145, and 173–178; these read GRSNVGKS, GKTML, DLPG, TKAD, and YFISSS. Residues Ser37 and Thr59 each coordinate Mg(2+).

This sequence belongs to the TRAFAC class TrmE-Era-EngA-EngB-Septin-like GTPase superfamily. EngB GTPase family. Requires Mg(2+) as cofactor.

Its function is as follows. Necessary for normal cell division and for the maintenance of normal septation. This Bacteroides thetaiotaomicron (strain ATCC 29148 / DSM 2079 / JCM 5827 / CCUG 10774 / NCTC 10582 / VPI-5482 / E50) protein is Probable GTP-binding protein EngB.